The sequence spans 1576 residues: MDAAKRLELCKEIQENEIEALKAIFMDDFEELKVRNAWNVTNGHVYCIHLCSRSANSKSIAKLDLCIELGRSYPYVKPVIKLQNGENVLNSQIRFLLDKLDTKAKDLLGEEMIFELASIVQDYLNDWQSDLSSQFASLEEERAVQLKHDRERAEVDLQLRLKREKDALFEEEQTLQNKIQDELQRRSYETPQSSSKKKTNSKETTSLETLPTSIYFDCSISVRDCHDSLVTFNRVLPLYTISHSNLSTLTLVKPESKEISLQDCVFLLRTVRISTPYWSTEDGKREIQELEYELESLKVIRHDLLASIYEYQLERETRGYGWRLYVLQEYSPKFTLFSLLQTVLTLDVETVRAFSNNILEGLAELHRLGISHKSLHLDNVVLFHSGHRTFAKLMDFGFTRTLRDMNASHPFNINSQSITNILPEGLYPPEVSESSFAAASRKTDIWCFGLLVLQMLCGAHVLNKFSSLKLIMTHVIPLLPGSYQDLVRRCLMRDSRKRPSAIDLLSSHVIRLGTAVLPPVEQGTFSKSARPSYGGQQDGIIDLLYRKSVSRYETDFEELEFLGRGGFGEVVKVKNRIDGRFYAVKKLVLLSDDKENSRILREVMTLSRLHHEHVVRYYTAWVETEANDTVTEIISSDSESLSQSLNMAVDFRQSSSLPADKLSSLDIHFEDDYNSSADEEDPEASDISFQYSNTSDKEGSSDKDSSIEEASSVKTQENGLNATLYIQMEYCEKLSLQDIIRDKIPVDEMWRLFRQILEALAYIHSRGMMHRDLKPGNIFLDENRNVKLGDFGLATENENYQDNNDKWKNRQSADEDLTTGVGTALYVAPELLSRRNGVRYDAKVDMYSLGIILFEMCMTFSTSMERIRIIDTIRSPSISFPSTFPFSRASHEFKVIHCLLQHDPTKRPSSQELLESEAIPPKVGEEFIQEGLRLLSNPNTPYYLKLLKVLFGQVPDRHKDFTYDFNLSEESGVLSKVSDRGWDSLLACLVRDHVVKVFRRHGAKERESHILFPKSSQYDKDQASVSLLDKNGTLLQLPYDTVLPYARNVARNAVEEEKTYLISDVFREAKGGGRPKAIKEISFDITTNSDNLDWYDAETIKALDEVLTEIPSLTESCILINHADILSSILDYLQVSKDKRRMATHILGQINQRLTLSQVRNQLRIESLVPSTTLDDLSLFDFRENYEEGASKLRKIFGKEMPQKMRTALNYMERVVKLLRALKISHQLYFMPLCVYNFEFYDGGLMFQAINLAEKSELICAGGRYDKLVRFFDPPLMRTARKKHVVGICFALEKLVFSMLRYIRFHNSKQSSKHSPSPTLKSVGPWAPRRVDVLVTSIGKDSILEKCSLLQELWALNIQADIVLRGASSLEEIVTHYRSEGINWVLVVRQKNTQMEHSVKARNILKNEDDEIRFDEVGMWLLGEINERKRNESMLQSKRILDSAQQDVAKFVDTSQSNLDVQLISLKDVNDRKYKWKHKQNAMNKVYDLVQSAIRESSEDAIALAVDCDSEAMEKLRSTTTLDEESWKRLIESCPASQREYMQRLQKKLVTLAEQDKKRVWICSFRTNEIYLYGLK.

Residues 16-127 (NEIEALKAIF…SIVQDYLNDW (112 aa)) enclose the RWD domain. The segment at 180 to 204 (QDELQRRSYETPQSSSKKKTNSKET) is disordered. 2 consecutive Protein kinase domains span residues 235–511 (VLPL…HVIR) and 556–928 (FEEL…EEFI). ATP contacts are provided by residues 562 to 570 (LGRGGFGEV) and lysine 585. The segment at 673–714 (YNSSADEEDPEASDISFQYSNTSDKEGSSDKDSSIEEASSVK) is disordered. Residues 695-706 (SDKEGSSDKDSS) are compositionally biased toward basic and acidic residues. Aspartate 772 (proton acceptor) is an active-site residue.

This sequence belongs to the protein kinase superfamily. Ser/Thr protein kinase family. GCN2 subfamily. Homodimer; homodimerization is important for kinase activation by uncharged tRNAs. Interacts (via N-terminal RWD domain) with gcn1 (via N- and C-terminus); this interaction stimulates gcn2 kinase activity in a gcn20-dependent manner in response to amino acid starvation. Interacts (via N-terminus) with the gcn1-gcn20 complex on translating ribosomes in amino acid-starved cells; gcn1 may bind near the ribosomal A-site and promotes the transfer of uncharged tRNAs from the A-site to the tRNA-binding domain in gcn2 for its subsequent kinase activation, and hence allowing fil1 translational activation and derepression of amino acid biosynthetic genes. In terms of processing, autophosphorylated.

It is found in the cytoplasm. It catalyses the reaction L-seryl-[protein] + ATP = O-phospho-L-seryl-[protein] + ADP + H(+). The catalysed reaction is L-threonyl-[protein] + ATP = O-phospho-L-threonyl-[protein] + ADP + H(+). The integrated stress response (ISR) is activated in response to conditions that promote ribosome collisions: gcn1, which acts as a ribosome collision sensor, activates gcn2. The RQC pathway and the integrated stress response (ISR) antagonize each other: hel2 prevents the activation of gcn2, while gcn2 suppresses RQC activation. Ribosome stalling-induced integrated stress response prefers ribosomes with empty A sites. The kinase activity is stimulated upon binding to uncharged tRNAs. Functionally, metabolic-stress sensing protein kinase that phosphorylates the alpha subunit of eukaryotic translation initiation factor 2 (eIF-2-alpha/SUI2) on 'Ser-52' in response to low amino acid, carbon, or purine availability. Required for adapatation to nutrient starvation by acting as a key component of the integrated stress response (ISR), by which cells alter their translational and transcriptional output in response to starvation. Converts phosphorylated eIF-2-alpha/SUI2 either to a competitive inhibitor of translation initiation factor eIF-2B, leading to a global protein synthesis repression, and thus to a reduced overall utilization of amino acids, or to a translational initiation activation of specific mRNAs, such as the transcriptional activator GCN4, and hence allowing GCN4-mediated reprogramming of transcription to alleviate nutrient depletion. Binds uncharged tRNAs. The protein is eIF-2-alpha kinase GCN2 of Schizosaccharomyces pombe (strain 972 / ATCC 24843) (Fission yeast).